The primary structure comprises 462 residues: uncharacterized protein (462 aa).

Helical transmembrane passes span 12–32 and 257–277; these read WWWL…APTV and GLCV…LELV.

It belongs to the HHV-5 US29 protein family.

The protein resides in the host membrane. This is an uncharacterized protein from Homo sapiens (Human).